A 528-amino-acid chain; its full sequence is PC4 and SFRS1-interacting protein (528 aa).

One can recognise a PWWP domain in the interval 7-64 (PGDLIFAKMKGYPHWPARVDEVPDGAVKPPTNKLPIFFFGTHETAFLGPKDIFPYSEN). The interval 61–348 (YSENKEKYGK…EKKRETSMDS (288 aa)) is disordered. Lys-75 is covalently cross-linked (Glycyl lysine isopeptide (Lys-Gly) (interchain with G-Cter in SUMO2)). Residues 92–106 (FSSQQASTKQSNASS) show a composition bias toward polar residues. 3 positions are modified to phosphoserine: Ser-102, Ser-105, and Ser-106. Positions 113–135 (KETNVSKEDTDQEEKASNEDVTK) are enriched in basic and acidic residues. Residues Thr-115 and Thr-122 each carry the phosphothreonine modification. Residue Ser-129 is modified to Phosphoserine. Phosphothreonine is present on Thr-141. The segment covering 144-153 (AARRGRKRKA) has biased composition (basic residues). The Nuclear localization signal signature appears at 146-156 (RRGRKRKAEKQ). Phosphoserine is present on residues Ser-176 and Ser-205. The segment covering 212 to 260 (DEDKSKKKGPEEKQPKKQLKKEEEGQKEEEKPRKEPDKKEGKKEVESKR) has biased composition (basic and acidic residues). At Ser-270 the chain carries Phosphoserine. The residue at position 271 (Thr-271) is a Phosphothreonine. A phosphoserine mark is found at Ser-272 and Ser-274. Residues 285-300 (KRKGGRNFQAAHRRNM) show a composition bias toward basic residues. The span at 303–348 (GQHEKEAGDRKRKQEEQMETEQQNKDEGKKPEVKKVEKKRETSMDS) shows a compositional bias: basic and acidic residues. 2 coiled-coil regions span residues 306–332 (EKEA…EGKK) and 369–393 (NRCI…KHTE). Residues 338 to 415 (VEKKRETSMD…VSQVIMEKST (78 aa)) are integrase-binding domain (IBD). Position 432 is a phosphoserine (Ser-432). Position 435 is a phosphothreonine (Thr-435). Ser-441 is subject to Phosphoserine. Over residues 444-471 (EQRQHEEANKTKDQGKKGPNKKLEKEPT) the composition is skewed to basic and acidic residues. Residues 444–528 (EQRQHEEANK…ISLKESTLDN (85 aa)) are disordered. Positions 472–492 (GTKSLNGGSDAQESNHPQHNG) are enriched in polar residues. The span at 496 to 528 (EDGKDSREASSKTKPPGEEREAEISLKESTLDN) shows a compositional bias: basic and acidic residues. A Citrulline modification is found at Arg-515. The residue at position 520 (Ser-520) is a Phosphoserine. A Phosphothreonine modification is found at Thr-525.

It belongs to the HDGF family. In terms of assembly, monomer. Interacts with IFRD1/PC4. Interacts (via IBD domain) with POGZ (via IBM motif) and CDCA7L (via IBM motifs). Interacts (via IBD domain) with KMT2A (via IBM motifs) with a moderate affinity whereas interacts with the KMT2A-MEN1 complex with a greater affinity; MEN1 enhances interaction of KMT2A with PSIP1. Interacts (via IBD domain) with IWS1 (via IBM motif), MED1 (via IBM motif) and DBF4 (via IBM motifs). Post-translationally, citrullinated by PADI4.

It is found in the nucleus. Its function is as follows. Transcriptional coactivator involved in neuroepithelial stem cell differentiation and neurogenesis. Involved in particular in lens epithelial cell gene regulation and stress responses. May play an important role in lens epithelial to fiber cell terminal differentiation. May play a protective role during stress-induced apoptosis. The chain is PC4 and SFRS1-interacting protein (Psip1) from Mus musculus (Mouse).